The following is a 142-amino-acid chain: Aspartate 1-decarboxylase (142 aa).

The active-site Schiff-base intermediate with substrate; via pyruvic acid is the Ser25. Pyruvic acid (Ser) is present on Ser25. Thr57 is a substrate binding site. Catalysis depends on Tyr58, which acts as the Proton donor. Residue 73-75 (GAA) participates in substrate binding.

The protein belongs to the PanD family. In terms of assembly, heterooctamer of four alpha and four beta subunits. It depends on pyruvate as a cofactor. Post-translationally, is synthesized initially as an inactive proenzyme, which is activated by self-cleavage at a specific serine bond to produce a beta-subunit with a hydroxyl group at its C-terminus and an alpha-subunit with a pyruvoyl group at its N-terminus.

Its subcellular location is the cytoplasm. The catalysed reaction is L-aspartate + H(+) = beta-alanine + CO2. The protein operates within cofactor biosynthesis; (R)-pantothenate biosynthesis; beta-alanine from L-aspartate: step 1/1. In terms of biological role, catalyzes the pyruvoyl-dependent decarboxylation of aspartate to produce beta-alanine. This chain is Aspartate 1-decarboxylase, found in Mycobacterium leprae (strain Br4923).